Reading from the N-terminus, the 447-residue chain is Asparagine--tRNA ligase (447 aa).

This sequence belongs to the class-II aminoacyl-tRNA synthetase family. As to quaternary structure, homodimer.

The protein localises to the cytoplasm. The catalysed reaction is tRNA(Asn) + L-asparagine + ATP = L-asparaginyl-tRNA(Asn) + AMP + diphosphate + H(+). This Mycoplasma mobile (strain ATCC 43663 / 163K / NCTC 11711) (Mesomycoplasma mobile) protein is Asparagine--tRNA ligase.